The primary structure comprises 1172 residues: Protein diaphanous homolog 3 (1172 aa).

Basic and acidic residues predominate over residues 1 to 15 (MEKHRARALGRDSKA). The tract at residues 1-36 (MEKHRARALGRDSKASRRKGLPSAPPAGPYELGEKR) is disordered. Positions 16–39 (SRRKGLPSAPPAGPYELGEKRPKL) match the Nuclear localization signal motif. Position 47 is a phosphothreonine (T47). S56 is modified (phosphoserine). A disordered region spans residues 57-96 (IRIPKGSKKERPPLPQLKTVSGSSDYSSVSSETMENNPKS). Residues 77–87 (SGSSDYSSVSS) show a composition bias toward low complexity. In terms of domain architecture, GBD/FH3 spans 94-456 (PKSLSENEVL…QIVLHRDGID (363 aa)). S155 is modified (phosphoserine). Residues 493-530 (CKKFEKECTDHQETQAQLQKKEAKINELQAELQAFKSQ) are a coiled coil. The tract at residues 535-586 (PPGTKIPLQTSAKGEPGPSAFPPAPPALGAGVPPPPPPPPPPPPPLPGMAMP) is disordered. Residues 541-611 (PLQTSAKGEP…GQNFIPLNLP (71 aa)) form the FH1 domain. A compositionally biased stretch (pro residues) spans 553-581 (SAFPPAPPALGAGVPPPPPPPPPPPPPLP). Residues 616-1014 (PKKEFKPEIS…EKRARIAKER (399 aa)) form the FH2 domain. The region spanning 1037 to 1067 (DETGVMDSLLEALQSGAAFRDRRKRTPKLKD) is the DAD domain. 2 positions are modified to phosphoserine: S1073 and S1158. The Nuclear export signal motif lies at 1163 to 1172 (EALLARLRAL).

It belongs to the formin homology family. Diaphanous subfamily. Ubiquitinated. In terms of tissue distribution, expressed in testis. Present in Sertoli cells (at protein level).

Its subcellular location is the cytoplasm. It is found in the nucleus. In terms of biological role, actin nucleation and elongation factor required for the assembly of F-actin structures, such as actin cables and stress fibers. Required for cytokinesis, stress fiber formation and transcriptional activation of the serum response factor. Binds to GTP-bound form of Rho and to profilin: acts in a Rho-dependent manner to recruit profilin to the membrane, where it promotes actin polymerization. DFR proteins couple Rho and Src tyrosine kinase during signaling and the regulation of actin dynamics. Also acts as an actin nucleation and elongation factor in the nucleus by promoting nuclear actin polymerization inside the nucleus to drive serum-dependent SRF-MRTFA activity. The chain is Protein diaphanous homolog 3 from Rattus norvegicus (Rat).